A 599-amino-acid polypeptide reads, in one-letter code: Exocyst complex component EXO70B2 (599 aa).

The tract at residues 38 to 58 is disordered; the sequence is GASGNRGGDPRPTPSRGGSNV.

It belongs to the EXO70 family. As to quaternary structure, self interacts. Interacts with EXO70B1. Interacts with the exocyst subunits EXO70H1, SEC5A and SEC15B. Binds to SNAP33. Subunit of the exocyst complex that mediates vesicle tethering during exocytosis. Binds to PUB22. Target of the E3 ubiquitin-protein ligase PUB22 that mediates its ubiquitination and degradation via the 26S proteasome to attenuate pathogen-associated molecular patterns (PAMP)-induced signaling, especially is response to the bacterial elicitor flg22. As to expression, mostly expressed in leaves and, to a lower extent, in roots, cotyledons, internodes, flower buds, siliques and anthers.

The protein resides in the cytoplasmic vesicle. It is found in the phagosome. The protein localises to the cytoplasm. It localises to the nucleus. Its function is as follows. Component of an exocyst subcomplex specifically involved in autophagy-related, Golgi-independent membrane traffic to the vacuole. Regulates autophagosome formation and autophagy-related Golgi-independent import into the vacuole. Positive regulator of defense responses to pathogenic bacteria (e.g. P.syringae pv. maculicola), to the biotrophic oomycete H.arabidopsidis and to fungi (e.g. B.graminis hordei), especially in cell wall apposition formation related to plant defense. Required for both immediate and later responses triggered by pathogen-associated molecular patterns (PAMPs). Positive regulator of abscisic acid (ABA)-independent mannitol (drought)-promoted stomatal closure. The chain is Exocyst complex component EXO70B2 from Arabidopsis thaliana (Mouse-ear cress).